Here is a 456-residue protein sequence, read N- to C-terminus: Exodeoxyribonuclease 7 large subunit (456 aa).

It belongs to the XseA family. As to quaternary structure, heterooligomer composed of large and small subunits.

It is found in the cytoplasm. It catalyses the reaction Exonucleolytic cleavage in either 5'- to 3'- or 3'- to 5'-direction to yield nucleoside 5'-phosphates.. Bidirectionally degrades single-stranded DNA into large acid-insoluble oligonucleotides, which are then degraded further into small acid-soluble oligonucleotides. The chain is Exodeoxyribonuclease 7 large subunit from Escherichia coli (strain ATCC 8739 / DSM 1576 / NBRC 3972 / NCIMB 8545 / WDCM 00012 / Crooks).